A 347-amino-acid chain; its full sequence is Haptoglobin (347 aa).

The first 18 residues, 1-18, serve as a signal peptide directing secretion; it reads MRALGAVVTLLLWGQLFA. The Sushi domain maps to 31–88; sequence DSCPKPPEIANGYVEHLVRYRCRQFYKLQTEGDGIYTLNSEKQWVNPAAGDKLPKCEA. Cystine bridges form between Cys-52–Cys-86, Cys-90–Cys-207, Cys-250–Cys-281, and Cys-292–Cys-322. Residues 103–345 form the Peptidase S1 domain; that stretch reads IIGGSMDAKG…LKDWVQETMA (243 aa). Asn-148 and Asn-152 each carry an N-linked (GlcNAc...) asparagine glycan. The interaction with CD163 stretch occupies residues 259–264; it reads VPEKKG.

It belongs to the peptidase S1 family. Tetramer of two alpha and two beta chains; disulfide-linked. The hemoglobin/haptoglobin complex is composed of a haptoglobin dimer bound to two hemoglobin alpha-beta dimers. Interacts with CD163. Interacts with ERGIC3. In terms of tissue distribution, expressed by the liver and secreted in plasma.

The protein resides in the secreted. In terms of biological role, as a result of hemolysis, hemoglobin is found to accumulate in the kidney and is secreted in the urine. Haptoglobin captures, and combines with free plasma hemoglobin to allow hepatic recycling of heme iron and to prevent kidney damage. Haptoglobin also acts as an antioxidant, has antibacterial activity and plays a role in modulating many aspects of the acute phase response. Hemoglobin/haptoglobin complexes are rapidly cleared by the macrophage CD163 scavenger receptor expressed on the surface of liver Kupfer cells through an endocytic lysosomal degradation pathway. The polypeptide is Haptoglobin (Hp) (Rattus norvegicus (Rat)).